A 458-amino-acid polypeptide reads, in one-letter code: Methionine aminopeptidase 2-2 (458 aa).

Basic and acidic residues predominate over residues 1–14; that stretch reads MGSKTPERDGHKGQ. Residues 1-93 form a disordered region; it reads MGSKTPERDG…QSSPPRVPLS (93 aa). The segment covering 67-82 has biased composition (basic residues); it reads QKKKRKSKKKGKKKAA. H209 contacts substrate. A divalent metal cation contacts are provided by D230, D241, and H310. H318 contributes to the substrate binding site. Residues E343 and E439 each contribute to the a divalent metal cation site.

This sequence belongs to the peptidase M24A family. Methionine aminopeptidase eukaryotic type 2 subfamily. The cofactor is Co(2+). It depends on Zn(2+) as a cofactor. Mn(2+) is required as a cofactor. Fe(2+) serves as cofactor.

It localises to the cytoplasm. It carries out the reaction Release of N-terminal amino acids, preferentially methionine, from peptides and arylamides.. In terms of biological role, cotranslationally removes the N-terminal methionine from nascent proteins. The N-terminal methionine is often cleaved when the second residue in the primary sequence is small and uncharged (Met-Ala-, Cys, Gly, Pro, Ser, Thr, or Val). The protein is Methionine aminopeptidase 2-2 of Emericella nidulans (strain FGSC A4 / ATCC 38163 / CBS 112.46 / NRRL 194 / M139) (Aspergillus nidulans).